The following is a 309-amino-acid chain: Ferrochelatase (309 aa).

Fe cation is bound by residues H185 and E262.

This sequence belongs to the ferrochelatase family.

The protein resides in the cytoplasm. It catalyses the reaction heme b + 2 H(+) = protoporphyrin IX + Fe(2+). It functions in the pathway porphyrin-containing compound metabolism; protoheme biosynthesis; protoheme from protoporphyrin-IX: step 1/1. Functionally, catalyzes the ferrous insertion into protoporphyrin IX. This is Ferrochelatase from Campylobacter jejuni subsp. jejuni serotype O:6 (strain 81116 / NCTC 11828).